A 203-amino-acid chain; its full sequence is Dephospho-CoA kinase (203 aa).

Residues Lys3–Asn202 form the DPCK domain. Gly11–Thr16 provides a ligand contact to ATP.

This sequence belongs to the CoaE family.

Its subcellular location is the cytoplasm. The catalysed reaction is 3'-dephospho-CoA + ATP = ADP + CoA + H(+). Its pathway is cofactor biosynthesis; coenzyme A biosynthesis; CoA from (R)-pantothenate: step 5/5. Catalyzes the phosphorylation of the 3'-hydroxyl group of dephosphocoenzyme A to form coenzyme A. In Rhizobium etli (strain ATCC 51251 / DSM 11541 / JCM 21823 / NBRC 15573 / CFN 42), this protein is Dephospho-CoA kinase.